The sequence spans 117 residues: uncharacterized protein (117 aa).

Positions methionine 1–aspartate 12 are enriched in polar residues. Disordered stretches follow at residues methionine 1–alanine 30 and valine 43–proline 87.

This is an uncharacterized protein from Mus musculus (Mouse).